Here is a 247-residue protein sequence, read N- to C-terminus: Triosephosphate isomerase (247 aa).

Substrate contacts are provided by Asn10 and Lys12. His94 serves as the catalytic Electrophile. The active-site Proton acceptor is the Glu164.

This sequence belongs to the triosephosphate isomerase family. In terms of assembly, homodimer.

The protein localises to the cytoplasm. The catalysed reaction is D-glyceraldehyde 3-phosphate = dihydroxyacetone phosphate. It catalyses the reaction dihydroxyacetone phosphate = methylglyoxal + phosphate. It participates in carbohydrate biosynthesis; gluconeogenesis. The protein operates within carbohydrate degradation; glycolysis; D-glyceraldehyde 3-phosphate from glycerone phosphate: step 1/1. Triosephosphate isomerase is an extremely efficient metabolic enzyme that catalyzes the interconversion between dihydroxyacetone phosphate (DHAP) and D-glyceraldehyde-3-phosphate (G3P) in glycolysis and gluconeogenesis. Functionally, it is also responsible for the non-negligible production of methylglyoxal a reactive cytotoxic side-product that modifies and can alter proteins, DNA and lipids. The chain is Triosephosphate isomerase from Latimeria chalumnae (Coelacanth).